The chain runs to 350 residues: Nicotinate-nucleotide--dimethylbenzimidazole phosphoribosyltransferase (350 aa).

Glutamate 318 serves as the catalytic Proton acceptor.

It belongs to the CobT family.

It catalyses the reaction 5,6-dimethylbenzimidazole + nicotinate beta-D-ribonucleotide = alpha-ribazole 5'-phosphate + nicotinate + H(+). The protein operates within nucleoside biosynthesis; alpha-ribazole biosynthesis; alpha-ribazole from 5,6-dimethylbenzimidazole: step 1/2. Functionally, catalyzes the synthesis of alpha-ribazole-5'-phosphate from nicotinate mononucleotide (NAMN) and 5,6-dimethylbenzimidazole (DMB). This Citrifermentans bemidjiense (strain ATCC BAA-1014 / DSM 16622 / JCM 12645 / Bem) (Geobacter bemidjiensis) protein is Nicotinate-nucleotide--dimethylbenzimidazole phosphoribosyltransferase.